The primary structure comprises 175 residues: NADH-ubiquinone oxidoreductase chain 6 (175 aa).

A run of 6 helical transmembrane segments spans residues 1-21, 25-45, 47-67, 88-108, 115-137, and 149-169; these read MMTY…IGSP, SPIY…GMVL, FGGS…MLVV, VVLG…LYVL, LVFK…GVFS, and YGVW…VVIM.

It belongs to the complex I subunit 6 family. In terms of assembly, core subunit of respiratory chain NADH dehydrogenase (Complex I) which is composed of 45 different subunits.

It localises to the mitochondrion inner membrane. The enzyme catalyses a ubiquinone + NADH + 5 H(+)(in) = a ubiquinol + NAD(+) + 4 H(+)(out). Core subunit of the mitochondrial membrane respiratory chain NADH dehydrogenase (Complex I) which catalyzes electron transfer from NADH through the respiratory chain, using ubiquinone as an electron acceptor. Essential for the catalytic activity and assembly of complex I. The protein is NADH-ubiquinone oxidoreductase chain 6 (MT-ND6) of Hippopotamus amphibius (Hippopotamus).